The primary structure comprises 1483 residues: Chromosome partition protein MukB (1483 aa).

34-41 is a binding site for ATP; that stretch reads GGNGAGKS. Coiled-coil stretches lie at residues 311-426 and 547-607; these read EMAR…LQRA and GQQV…WLAA. Positions 666–783 are flexible hinge; that stretch reads PGGSEDARLN…KVPLFGRAAR (118 aa). Coiled coils occupy residues 835–1115 and 1206–1266; these read EAAL…SAKA and DDPV…QAVS. The interval 850 to 870 is disordered; it reads RELNNHESENQQQRQQYEQAK.

This sequence belongs to the SMC family. MukB subfamily. In terms of assembly, homodimerization via its hinge domain. Binds to DNA via its C-terminal region. Interacts, and probably forms a ternary complex, with MukE and MukF via its C-terminal region. The complex formation is stimulated by calcium or magnesium. Interacts with tubulin-related protein FtsZ.

The protein resides in the cytoplasm. It is found in the nucleoid. Plays a central role in chromosome condensation, segregation and cell cycle progression. Functions as a homodimer, which is essential for chromosome partition. Involved in negative DNA supercoiling in vivo, and by this means organize and compact chromosomes. May achieve or facilitate chromosome segregation by condensation DNA from both sides of a centrally located replisome during cell division. The protein is Chromosome partition protein MukB of Erwinia tasmaniensis (strain DSM 17950 / CFBP 7177 / CIP 109463 / NCPPB 4357 / Et1/99).